A 2453-amino-acid chain; its full sequence is MHVSLAEALEVRGGPLQEEEIWAVLNQSAESLQEVFRRVSIADPAALGFIISPWSLLLLPSGSVSFTDENVSNQDLRASTAPEVLQSHSLTSLADVEKIHIYSLGMTLYWGADHEVPQSQPIKLGDHLNSILLGMCEDVIYARVSVRTVLDACSAHIRNSNCAPSFSNVKQLVKLVLGNISGTDPLSRSSEQKPDRSQAIRDRLRGKGLPTGRSSTSDALDTHEAPLSQQTFVNKGLSKSMGFLSIRDTRDEEDYLKDTPSDNNSRHEDSETFSSPYQFKTSTPQMDALSKKKTWASSMDLLCAANRDISGETGRYQRCDPKTVTGRTSITPRKKEGRYSDGSIALDIFGPQKVEPVIHTRELPTSTAVSSALDRIRERQQKLQVLREAMNVEEPVRRYKTYHSDIFSISSESPSVISSESDFRQVRKSEASKRFESSSGLPGVDETGQTRPSRQYETSLEGNLINQDIMLRRQEEEMMQLQARMALRQSRLSLYPGDTVKASMLDISRDPLREMALETAMTQRKLRNFFGPEFVKMTVEPFVSLDLPRSILSQTKKGKSEDQRRKVNIRLLSGQRLELTCDTKTICKDVFDMVVAHIGLVEHHLFALATRKENEYFFVDPDLKLTKVAPEGWKEEPKRKGKAAVDFTLFFRIKFFMDDVSLIQHDLTCHQYYLQLRKDLLDERVHCDDEAALLLASLALQAEYGDYQPEVHGVSYFRLEHYLPARVMEKLDVSYIKEELPKLHNTYAGASEKETELEFLKVCQRLTEYGVHFHRVHPEKKSQTGILLGVCSKGVLVFEVHNGVRALVLRFPWRETKKISFSKKKITLQNTSDGIKHAFQTDSSKACQYLLHLCSSQHKFQLQMRARQSNQDAQDIERASFRSLNLQAESVRGFNMGRAISTGSLASSTINKLAVRPLSVQAEILKRLSSSEWSLYQPLQNSSKEKTDKASWEEKPRGMSKSYHDLSQASLCPHRKQVINMEALPQAFAELVGKPLYPMARSDTESLAGLPKLDNSKSVASLNRSPERRNHESDSSTEDPGQAYVVGMSLPSSGKSSSQVPFKDNDTLHKRWSIVSSPEREITLVNLKKDPKHGLGFQIIGGEKMGRLDLGVFISAVTPGGPADLDGCLKPGDRLISVNSVSLEGVSHHAAVDILQNAPEDVTLVISQPKEKPSKVPSTPVHFANGMKSYTKKPAYMQDSAMDPSEDQPWPRGTLRHIPESPFGLSGGLREGSLSSQDSRTESASLSQSQVNGFFASHLGDRGWQEPQHSSPSPSVTTKVNEKTFSDSNRSKAKRRGISDLIEHLDCADSDKDDSTYTSSQDHQTSKQEPSSSLSTSNKTSFPTSSASPPKPGDTFEVELAKTDGSLGISVTGGVNTSVRHGGIYVKAIIPKGAAESDGRIHKGDRVLAVNGVSLEGATHKQAVETLRNTGQVVHLLLEKGQVPTSRERDPAGPQSPPPDQDAQRQAPEKVAKQTPHVKDYSFVTEDNTFEVKLFKNSSGLGFSFSREDNLIPEQINGSIVRVKKLFPGQPAAESGKIDVGDVILKVNGAPLKGLSQQDVISALRGTAPEVSLLLCRPAPGVLPEIDTTFLNPLYSPANSFLNSSKETSQPSSSVEQGASSDDNGVSGKTKNHCRAPSRRESYSDHSESGEDDSVRAPAKMPNVTRVAAFPHEAPRSQEESICAMFYLPRKIPGKLESESSHPPPLDVSPGQTCQPPAECAPSDATGKHFTHLASQLSKEENITTLKNDLGNHLEDSELEVELLITLVKSEKGSLGFTVTKGSQSIGCYVHDVIQDPAKGDGRLKAGDRLIKVNDTDVTNMTHTDAVNLLRAAPKTVRLVLGRILELPRMPVFPHLLPDITVTCHGEELGFSLSGGQGSPHGVVYISDINPRSAAAVDGSLQLLDIIHYVNGVSTQGMTLEDANRALDLSLPSVVLKVTRDGCPVVPTTRAAISAPRFTKANGLTSMEPSGQPALMPKNSFSKVNGEGVHEAVCPAGEGSSSQMKESAGLTETKESNSRDDDIYDDPQEAEVIQSLLDVVDEEAQNLLNQRHATRRACSPDPLRTNGEAPEEGDTDYDGSPLPEDVPESVSSGEGKVDLASLTAASQEEKPIEEDATQESRNSTTETTDGEDSSKDPPFLTNEELAALPVVRVPPSGKYTGTQLQATIRTLQGLLDQGIPSKELENLQELKPLDQCLIGQTKENRRKNRYKNILPYDTTRVPLGDEGGYINASFIRIPVGTQEFVYIACQGPLPTTVGDFWQMVWEQNSTVIAMMTQEVEGEKIKCQRYWPSILGTTTMANERLRLALLRMQQLKGFIVRVMALEDIQTGEVRHISHLNFTAWPDHDTPSQPDDLLTFISYMRHIRRSGPVITHCSAGIGRSGTLICIDVVLGLISQDLEFDISDLVRCMRLQRHGMVQTEGQYVFCYQVILYVLTHLQAEEQKAQQPGLPQP.

Positions 3–190 (VSLAEALEVR…SGTDPLSRSS (188 aa)) constitute a KIND domain. Residues 183–227 (TDPLSRSSEQKPDRSQAIRDRLRGKGLPTGRSSTSDALDTHEAPL) form a disordered region. Residues 190–205 (SEQKPDRSQAIRDRLR) are compositionally biased toward basic and acidic residues. Residue Ser240 is modified to Phosphoserine. Residues 253–285 (EDYLKDTPSDNNSRHEDSETFSSPYQFKTSTPQ) form a disordered region. Residues 256–270 (LKDTPSDNNSRHEDS) are compositionally biased toward basic and acidic residues. Residues 272–285 (TFSSPYQFKTSTPQ) are compositionally biased toward polar residues. 2 positions are modified to phosphoserine: Ser297 and Ser298. The interval 429–457 (SEASKRFESSSGLPGVDETGQTRPSRQYE) is disordered. The span at 447–457 (TGQTRPSRQYE) shows a compositional bias: polar residues. The stretch at 458–493 (TSLEGNLINQDIMLRRQEEEMMQLQARMALRQSRLS) forms a coiled coil. The FERM domain occupies 565 to 865 (RKVNIRLLSG…SQHKFQLQMR (301 aa)). Phosphoserine occurs at positions 883, 890, 901, 904, and 907. Basic and acidic residues predominate over residues 944–957 (KEKTDKASWEEKPR). 2 disordered regions span residues 944–966 (KEKTDKASWEEKPRGMSKSYHDL) and 1007–1063 (LAGL…VPFK). A phosphoserine mark is found at Ser1021 and Ser1025. Basic and acidic residues predominate over residues 1025 to 1034 (SPERRNHESD). Residues 1049–1058 (SLPSSGKSSS) show a composition bias toward low complexity. Ser1076 carries the post-translational modification Phosphoserine. The PDZ 1 domain maps to 1084–1170 (LVNLKKDPKH…DVTLVISQPK (87 aa)). Disordered regions lie at residues 1199 to 1356 (DSAM…GDTF) and 1441 to 1478 (GQVPTSRERDPAGPQSPPPDQDAQRQAPEKVAKQTPHV). Phosphoserine is present on Ser1221. Polar residues-rich tracts occupy residues 1242–1252 (ESASLSQSQVN) and 1267–1279 (PQHSSPSPSVTTK). Position 1270 is a phosphoserine (Ser1270). Positions 1297 to 1315 (GISDLIEHLDCADSDKDDS) are enriched in basic and acidic residues. Over residues 1331-1341 (SSSLSTSNKTS) the composition is skewed to low complexity. One can recognise a PDZ 2 domain in the interval 1357-1442 (EVELAKTDGS…VVHLLLEKGQ (86 aa)). Residues 1467-1478 (APEKVAKQTPHV) are compositionally biased toward basic and acidic residues. The 89-residue stretch at 1491-1579 (EVKLFKNSSG…EVSLLLCRPA (89 aa)) folds into the PDZ 3 domain. Over residues 1602–1629 (LNSSKETSQPSSSVEQGASSDDNGVSGK) the composition is skewed to polar residues. Disordered regions lie at residues 1602 to 1662 (LNSS…AKMP) and 1695 to 1726 (KLESESSHPPPLDVSPGQTCQPPAECAPSDAT). Basic and acidic residues predominate over residues 1638–1655 (SRRESYSDHSESGEDDSV). 2 PDZ domains span residues 1764-1845 (LITL…GRIL) and 1857-1942 (LPDI…TRDG). 2 disordered regions span residues 1991–2024 (EAVCPAGEGSSSQMKESAGLTETKESNSRDDDIY) and 2051–2139 (RHAT…DPPF). Residues 2012–2021 (ETKESNSRDD) are compositionally biased toward basic and acidic residues. A Tyrosine-protein phosphatase domain is found at 2180-2434 (PSKELENLQE…VFCYQVILYV (255 aa)). Substrate-binding positions include Asp2345, 2375-2381 (CSAGIGR), and Gln2419. Catalysis depends on Cys2375, which acts as the Phosphocysteine intermediate.

The protein belongs to the protein-tyrosine phosphatase family. Non-receptor class subfamily. Interacts (via the first PDZ domain) with PLEKHA1 and PLEKHA2. Interacts (via the second PDZ domain) with TNFRSF6 (Fas receptor) (via C-terminus). Interacts (via the second PDZ domain) with TRIP6 (via the third LIM domain and C-terminus). Interacts (via the third PDZ domain) with NGFR (via C-terminal SVP motif) and PKN2 (via C-terminus). Interacts (via the second or fourth PDZ domains) with PDLIM4 (via C-terminus only or via combined C-terminus and LIM domain, but not LIM domain only). Found in a complex with PDLIM4 and TRIP6. Interacts with PDLIM4; this interaction results in dephosphorylation of SRC 'Tyr-419' by this protein leading to its inactivation. Interacts with BRD7. Interacts with RAPGEF6. Interacts with ARHGAP29. Interacts with PIK3R2; dephosphorylates PIK3R2. Interacts with FBXL2. Interacts (via the FERM domain) with ENTR1. Found in a complex with ENTR1, PTPN13 and GIT1. In terms of tissue distribution, expressed predominantly in kidney and, to a lesser extent, in lung, heart, brain and testis.

The protein localises to the cytoplasm. It is found in the cytoskeleton. The protein resides in the nucleus. Its subcellular location is the cell projection. It localises to the lamellipodium. The enzyme catalyses O-phospho-L-tyrosyl-[protein] + H2O = L-tyrosyl-[protein] + phosphate. Tyrosine phosphatase which negatively regulates FAS-induced apoptosis and NGFR-mediated pro-apoptotic signaling. May regulate phosphoinositide 3-kinase (PI3K) signaling through dephosphorylation of PIK3R2. The sequence is that of Tyrosine-protein phosphatase non-receptor type 13 (Ptpn13) from Mus musculus (Mouse).